A 204-amino-acid chain; its full sequence is Venom allergen 5 (204 aa).

4 disulfides stabilise this stretch: C4-C17, C8-C101, C26-C94, and C170-C187. Residues 45-189 (LKEHNDFRQK…WHKHYLVCNY (145 aa)) form the SCP domain.

The protein belongs to the CRISP family. Venom allergen 5-like subfamily. As to expression, expressed by the venom gland.

The protein resides in the secreted. Its function is as follows. May have an ancestral function in the promotion of ovum fertilization by sperm. The sequence is that of Venom allergen 5 from Vespula flavopilosa (Downy yellowjacket).